A 208-amino-acid polypeptide reads, in one-letter code: Small ribosomal subunit protein uS4 (208 aa).

The region spanning 95 to 155 is the S4 RNA-binding domain; that stretch reads TRLDALVLRA…AKSQTMVPFQ (61 aa).

The protein belongs to the universal ribosomal protein uS4 family. In terms of assembly, part of the 30S ribosomal subunit. Contacts protein S5. The interaction surface between S4 and S5 is involved in control of translational fidelity.

Functionally, one of the primary rRNA binding proteins, it binds directly to 16S rRNA where it nucleates assembly of the body of the 30S subunit. In terms of biological role, with S5 and S12 plays an important role in translational accuracy. The polypeptide is Small ribosomal subunit protein uS4 (Bifidobacterium adolescentis (strain ATCC 15703 / DSM 20083 / NCTC 11814 / E194a)).